Reading from the N-terminus, the 221-residue chain is 6-phosphogluconate phosphatase (221 aa).

The Nucleophile role is filled by aspartate 10. Aspartate 10, aspartate 12, and aspartate 167 together coordinate Mg(2+). 10–12 (DCD) is a substrate binding site.

The protein belongs to the HAD-like hydrolase superfamily. CbbY/CbbZ/Gph/YieH family. Requires Mg(2+) as cofactor. It depends on Mn(2+) as a cofactor. Co(2+) serves as cofactor. Zn(2+) is required as a cofactor.

Catalyzes strongly the dephosphorylation of 6-phosphogluconate (6P-Glu) and slightly the dephosphorylation of dihydroxyacetone phosphate (DHAP) and phosphoenolpyruvate (PEP). Also hydrolyzes both purines (GMP and IMP) and pyrimidines as secondary substrates. This Escherichia coli (strain K12) protein is 6-phosphogluconate phosphatase (yieH).